A 100-amino-acid polypeptide reads, in one-letter code: Urease subunit gamma (100 aa).

This sequence belongs to the urease gamma subunit family. Heterotrimer of UreA (gamma), UreB (beta) and UreC (alpha) subunits. Three heterotrimers associate to form the active enzyme.

It is found in the cytoplasm. The catalysed reaction is urea + 2 H2O + H(+) = hydrogencarbonate + 2 NH4(+). It participates in nitrogen metabolism; urea degradation; CO(2) and NH(3) from urea (urease route): step 1/1. In Mesorhizobium japonicum (strain LMG 29417 / CECT 9101 / MAFF 303099) (Mesorhizobium loti (strain MAFF 303099)), this protein is Urease subunit gamma.